We begin with the raw amino-acid sequence, 156 residues long: 6,7-dimethyl-8-ribityllumazine synthase (156 aa).

5-amino-6-(D-ribitylamino)uracil is bound by residues Phe-23, Ala-57–Glu-59, and Ala-81–Ile-83. Ala-86 to Thr-87 serves as a coordination point for (2S)-2-hydroxy-3-oxobutyl phosphate. The active-site Proton donor is the His-89. Residue Phe-114 coordinates 5-amino-6-(D-ribitylamino)uracil. Arg-128 lines the (2S)-2-hydroxy-3-oxobutyl phosphate pocket.

It belongs to the DMRL synthase family.

The enzyme catalyses (2S)-2-hydroxy-3-oxobutyl phosphate + 5-amino-6-(D-ribitylamino)uracil = 6,7-dimethyl-8-(1-D-ribityl)lumazine + phosphate + 2 H2O + H(+). It participates in cofactor biosynthesis; riboflavin biosynthesis; riboflavin from 2-hydroxy-3-oxobutyl phosphate and 5-amino-6-(D-ribitylamino)uracil: step 1/2. Its function is as follows. Catalyzes the formation of 6,7-dimethyl-8-ribityllumazine by condensation of 5-amino-6-(D-ribitylamino)uracil with 3,4-dihydroxy-2-butanone 4-phosphate. This is the penultimate step in the biosynthesis of riboflavin. This chain is 6,7-dimethyl-8-ribityllumazine synthase, found in Sulfurovum sp. (strain NBC37-1).